The chain runs to 197 residues: Nucleoid occlusion factor SlmA (197 aa).

The 61-residue stretch at 7 to 67 (ISRREHILQC…GLIEFIEDSL (61 aa)) folds into the HTH tetR-type domain. The segment at residues 30 to 49 (TTAKLAAEVGVSEAALYRHF) is a DNA-binding region (H-T-H motif).

The protein belongs to the nucleoid occlusion factor SlmA family. Homodimer. Interacts with FtsZ.

It localises to the cytoplasm. It is found in the nucleoid. Functionally, required for nucleoid occlusion (NO) phenomenon, which prevents Z-ring formation and cell division over the nucleoid. Acts as a DNA-associated cell division inhibitor that binds simultaneously chromosomal DNA and FtsZ, and disrupts the assembly of FtsZ polymers. SlmA-DNA-binding sequences (SBS) are dispersed on non-Ter regions of the chromosome, preventing FtsZ polymerization at these regions. The polypeptide is Nucleoid occlusion factor SlmA (Shewanella amazonensis (strain ATCC BAA-1098 / SB2B)).